The following is a 208-amino-acid chain: Protein-L-isoaspartate O-methyltransferase (208 aa).

Serine 59 is a catalytic residue.

Belongs to the methyltransferase superfamily. L-isoaspartyl/D-aspartyl protein methyltransferase family.

The protein localises to the cytoplasm. It carries out the reaction [protein]-L-isoaspartate + S-adenosyl-L-methionine = [protein]-L-isoaspartate alpha-methyl ester + S-adenosyl-L-homocysteine. Functionally, catalyzes the methyl esterification of L-isoaspartyl residues in peptides and proteins that result from spontaneous decomposition of normal L-aspartyl and L-asparaginyl residues. It plays a role in the repair and/or degradation of damaged proteins. In Vibrio campbellii (strain ATCC BAA-1116), this protein is Protein-L-isoaspartate O-methyltransferase.